An 85-amino-acid chain; its full sequence is Small ribosomal subunit protein bS20 (85 aa).

The protein belongs to the bacterial ribosomal protein bS20 family.

Functionally, binds directly to 16S ribosomal RNA. The chain is Small ribosomal subunit protein bS20 from Ruminiclostridium cellulolyticum (strain ATCC 35319 / DSM 5812 / JCM 6584 / H10) (Clostridium cellulolyticum).